Consider the following 208-residue polypeptide: Ribosomal RNA large subunit methyltransferase E (208 aa).

S-adenosyl-L-methionine contacts are provided by Gly62, Trp64, Asp82, Asp98, and Asp123. The active-site Proton acceptor is the Lys163.

This sequence belongs to the class I-like SAM-binding methyltransferase superfamily. RNA methyltransferase RlmE family.

The protein localises to the cytoplasm. It catalyses the reaction uridine(2552) in 23S rRNA + S-adenosyl-L-methionine = 2'-O-methyluridine(2552) in 23S rRNA + S-adenosyl-L-homocysteine + H(+). Specifically methylates the uridine in position 2552 of 23S rRNA at the 2'-O position of the ribose in the fully assembled 50S ribosomal subunit. The sequence is that of Ribosomal RNA large subunit methyltransferase E from Glaesserella parasuis serovar 5 (strain SH0165) (Haemophilus parasuis).